The chain runs to 595 residues: Isoprene synthase, chloroplastic (595 aa).

A chloroplast-targeting transit peptide spans 1-37 (MATELLCLHRPISLTHKLFRNPLPKVIQATPLTLKLR). A dimethylallyl diphosphate-binding site is contributed by Asp-345. Mg(2+) contacts are provided by Asp-345 and Asp-349. The short motif at 345-349 (DDIYD) is the DDXXD motif element. Residues Glu-423, Arg-486, and Asn-489 each contribute to the dimethylallyl diphosphate site. Mg(2+)-binding residues include Asn-489, Ser-493, and Glu-497.

Belongs to the terpene synthase family. Tpsb subfamily. It depends on Mg(2+) as a cofactor. Mn(2+) serves as cofactor.

Its subcellular location is the plastid. It is found in the chloroplast. The catalysed reaction is dimethylallyl diphosphate = isoprene + diphosphate. In terms of biological role, lyase that catalyzes the formation of isoprene from dimethylallyl diphosphate. This chain is Isoprene synthase, chloroplastic (ISPS), found in Populus tremuloides (Quaking aspen).